We begin with the raw amino-acid sequence, 389 residues long: GTPase Obg (389 aa).

The 159-residue stretch at 1–159 (MKFVDEAVIK…RELRLELLLL (159 aa)) folds into the Obg domain. In terms of domain architecture, OBG-type G spans 160–333 (ADVGMLGLPN…LCYKLADFME (174 aa)). GTP is bound by residues 166–173 (GLPNAGKS), 191–195 (FTTLI), 213–216 (DIPG), 283–286 (NKVD), and 314–316 (SAV). Mg(2+) is bound by residues serine 173 and threonine 193. Residues 359–389 (NQGEVITEDDDDDWDDWDDEEDDGHVIYVRE) are disordered. Residues 364–381 (ITEDDDDDWDDWDDEEDD) are compositionally biased toward acidic residues.

The protein belongs to the TRAFAC class OBG-HflX-like GTPase superfamily. OBG GTPase family. Monomer. Mg(2+) serves as cofactor.

It localises to the cytoplasm. In terms of biological role, an essential GTPase which binds GTP, GDP and possibly (p)ppGpp with moderate affinity, with high nucleotide exchange rates and a fairly low GTP hydrolysis rate. Plays a role in control of the cell cycle, stress response, ribosome biogenesis and in those bacteria that undergo differentiation, in morphogenesis control. In Vibrio vulnificus (strain CMCP6), this protein is GTPase Obg.